Here is a 152-residue protein sequence, read N- to C-terminus: Small ribosomal subunit protein uS15 (152 aa).

The segment covering 1-16 has biased composition (basic residues); the sequence is MARIHARRRGKSGSKR. The disordered stretch occupies residues 1 to 21; sequence MARIHARRRGKSGSKRIYRDS.

The protein belongs to the universal ribosomal protein uS15 family. In terms of assembly, part of the 30S ribosomal subunit.

This is Small ribosomal subunit protein uS15 from Archaeoglobus fulgidus (strain ATCC 49558 / DSM 4304 / JCM 9628 / NBRC 100126 / VC-16).